We begin with the raw amino-acid sequence, 101 residues long: Pterin-4-alpha-carbinolamine dehydratase (101 aa).

Belongs to the pterin-4-alpha-carbinolamine dehydratase family.

It catalyses the reaction (4aS,6R)-4a-hydroxy-L-erythro-5,6,7,8-tetrahydrobiopterin = (6R)-L-erythro-6,7-dihydrobiopterin + H2O. This Drosophila virilis (Fruit fly) protein is Pterin-4-alpha-carbinolamine dehydratase (Pcd).